We begin with the raw amino-acid sequence, 727 residues long: Polyribonucleotide nucleotidyltransferase (727 aa).

The Mg(2+) site is built by D488 and D494. A KH domain is found at 555–614 (PKLYTMKINPEKIRDVIGKGGATIRALTDETGCQINIEEDGTITIAATEAAKADEAKRRI). The region spanning 624–692 (GKIYEGPVTK…DKGRVKLSMK (69 aa)) is the S1 motif domain. The tract at residues 691-727 (MKALADRPAGDSGRPAPAERGERRERRDGGASEQQQQ) is disordered. The span at 707 to 720 (PAERGERRERRDGG) shows a compositional bias: basic and acidic residues.

It belongs to the polyribonucleotide nucleotidyltransferase family. Mg(2+) is required as a cofactor.

The protein localises to the cytoplasm. It catalyses the reaction RNA(n+1) + phosphate = RNA(n) + a ribonucleoside 5'-diphosphate. Involved in mRNA degradation. Catalyzes the phosphorolysis of single-stranded polyribonucleotides processively in the 3'- to 5'-direction. The chain is Polyribonucleotide nucleotidyltransferase from Acidovorax sp. (strain JS42).